Consider the following 188-residue polypeptide: MKISANSIRTGNILVCNNDLWVVSKTPEHTQPGKGGAYVQVEMKNLKTGIKRNDRFSSSDYLEKAELEQKDYQFLYFEGNDLILMDTKHFDQINVPKGILEEKLPFLTENMIVKVEFYNEKPLNIELPPTVILEISETDPVIKGATATASYKPAVLENGIKVKVPQYLAIGEKIVVKTDDITYVERAK.

The protein belongs to the elongation factor P family.

It is found in the cytoplasm. It functions in the pathway protein biosynthesis; polypeptide chain elongation. In terms of biological role, involved in peptide bond synthesis. Stimulates efficient translation and peptide-bond synthesis on native or reconstituted 70S ribosomes in vitro. Probably functions indirectly by altering the affinity of the ribosome for aminoacyl-tRNA, thus increasing their reactivity as acceptors for peptidyl transferase. The chain is Elongation factor P from Rickettsia akari (strain Hartford).